The chain runs to 371 residues: Fructose-1,6-bisphosphatase class 1 1 (371 aa).

Mg(2+)-binding residues include Glu-115, Asp-134, Leu-136, and Asp-137. Residues 137–140, Asn-228, and 280–282 each bind substrate; these read DGSS and YLY. A Mg(2+)-binding site is contributed by Glu-300.

It belongs to the FBPase class 1 family. As to quaternary structure, homotetramer. Requires Mg(2+) as cofactor.

Its subcellular location is the cytoplasm. The enzyme catalyses beta-D-fructose 1,6-bisphosphate + H2O = beta-D-fructose 6-phosphate + phosphate. It functions in the pathway carbohydrate biosynthesis; gluconeogenesis. The chain is Fructose-1,6-bisphosphatase class 1 1 from Xanthobacter autotrophicus (strain ATCC BAA-1158 / Py2).